Reading from the N-terminus, the 443-residue chain is Tubulin beta chain (443 aa).

Residues Gln-11, Glu-69, Ser-138, Gly-142, Thr-143, Gly-144, Asn-204, and Asn-226 each contribute to the GTP site. Glu-69 serves as a coordination point for Mg(2+). Residues 424-443 (QYQDASAEEEGEFEGEEEEA) form a disordered region. The span at 429 to 443 (SAEEEGEFEGEEEEA) shows a compositional bias: acidic residues.

This sequence belongs to the tubulin family. As to quaternary structure, dimer of alpha and beta chains. A typical microtubule is a hollow water-filled tube with an outer diameter of 25 nm and an inner diameter of 15 nM. Alpha-beta heterodimers associate head-to-tail to form protofilaments running lengthwise along the microtubule wall with the beta-tubulin subunit facing the microtubule plus end conferring a structural polarity. Microtubules usually have 13 protofilaments but different protofilament numbers can be found in some organisms and specialized cells. It depends on Mg(2+) as a cofactor.

It localises to the cytoplasm. It is found in the cytoskeleton. Its function is as follows. Tubulin is the major constituent of microtubules, a cylinder consisting of laterally associated linear protofilaments composed of alpha- and beta-tubulin heterodimers. Microtubules grow by the addition of GTP-tubulin dimers to the microtubule end, where a stabilizing cap forms. Below the cap, tubulin dimers are in GDP-bound state, owing to GTPase activity of alpha-tubulin. This Chlamydomonas incerta protein is Tubulin beta chain (TUBB).